Consider the following 304-residue polypeptide: UDP-3-O-acyl-N-acetylglucosamine deacetylase (304 aa).

Residues His78, His237, and Asp241 each contribute to the Zn(2+) site. Catalysis depends on His264, which acts as the Proton donor.

This sequence belongs to the LpxC family. The cofactor is Zn(2+).

It carries out the reaction a UDP-3-O-[(3R)-3-hydroxyacyl]-N-acetyl-alpha-D-glucosamine + H2O = a UDP-3-O-[(3R)-3-hydroxyacyl]-alpha-D-glucosamine + acetate. It participates in glycolipid biosynthesis; lipid IV(A) biosynthesis; lipid IV(A) from (3R)-3-hydroxytetradecanoyl-[acyl-carrier-protein] and UDP-N-acetyl-alpha-D-glucosamine: step 2/6. Its function is as follows. Catalyzes the hydrolysis of UDP-3-O-myristoyl-N-acetylglucosamine to form UDP-3-O-myristoylglucosamine and acetate, the committed step in lipid A biosynthesis. The chain is UDP-3-O-acyl-N-acetylglucosamine deacetylase from Thioalkalivibrio sulfidiphilus (strain HL-EbGR7).